A 207-amino-acid polypeptide reads, in one-letter code: MPLFQNATFHISAHNLSDLPAPAGIEVVFAGRSNAGKSSALNTLANHNRLAFVSKQPGRTQLINFFSLGNDRFLVDLPGYGYAKVPEAVRKHWQLTLASYLSQRPCIGGLVLVMDCRHPLTPLDRQMLNWYSPSGKPIHALLTKADKLSRQAANQTLQQVRKELEASWGNCSVQLFSSLKKQGVEEAETVIGRWLFAPEDDVPDAVA.

Residues 23–197 enclose the EngB-type G domain; that stretch reads AGIEVVFAGR…ETVIGRWLFA (175 aa). Residues 31–38, 58–62, 76–79, 143–146, and 176–178 contribute to the GTP site; these read GRSNAGKS, GRTQL, DLPG, TKAD, and FSS. 2 residues coordinate Mg(2+): Ser38 and Thr60.

It belongs to the TRAFAC class TrmE-Era-EngA-EngB-Septin-like GTPase superfamily. EngB GTPase family. The cofactor is Mg(2+).

Functionally, necessary for normal cell division and for the maintenance of normal septation. This chain is Probable GTP-binding protein EngB, found in Methylobacillus flagellatus (strain ATCC 51484 / DSM 6875 / VKM B-1610 / KT).